Reading from the N-terminus, the 563-residue chain is Kelch repeat and BTB domain-containing protein 1 (563 aa).

The region spanning 21-88 is the BTB domain; it reads CDINIVINDE…IYGIPLSLTN (68 aa). Residues 123–219 enclose the BACK domain; that stretch reads CIDFYIYADK…SLLSPQVIKS (97 aa). Kelch repeat units lie at residues 252 to 297, 298 to 346, 347 to 395, 397 to 441, 442 to 492, and 494 to 538; these read IELI…VLDN, IIYM…ADDE, YIYC…MLNG, IYVI…VHAG, KIYI…SAHN, and LYVG…CEPI.

In terms of assembly, interacts (via BTB domain) with host CUL3.

It localises to the host cytoplasm. In terms of biological role, probable substrate-specific adapter of CUL3-containing E3 ubiquitin-protein ligases which mediate the ubiquitination and subsequent proteasomal degradation of host target proteins. The polypeptide is Kelch repeat and BTB domain-containing protein 1 (KBTB1) (Cowpox virus (strain Brighton Red) (CPV)).